Reading from the N-terminus, the 280-residue chain is Mesaconyl-C(4)-CoA hydratase (280 aa).

It belongs to the HTD2 family. In terms of assembly, homodimer.

It carries out the reaction (3S)-citramalyl-CoA = 3-methylfumaryl-CoA + H2O. Inhibited by 3-methylfumaryl-CoA concentrations above 0.3 mM. Functionally, involved in the glyoxylate assimilation cycle used to regenerate acetyl-CoA and produce pyruvate as universal precursor for biosynthesis. Catalyzes the hydration of 3-methylfumaryl-CoA (mesaconyl-C4-CoA) to (3S)-citramalyl-CoA. This is Mesaconyl-C(4)-CoA hydratase (meh) from Chloroflexus aurantiacus (strain ATCC 29366 / DSM 635 / J-10-fl).